We begin with the raw amino-acid sequence, 199 residues long: Protein GrpE (199 aa).

The tract at residues 1 to 40 (MEKKKHGTNSISEALKVKAAVEQETATPEPTPQSETESAD) is disordered. Polar residues predominate over residues 24–36 (ETATPEPTPQSET).

This sequence belongs to the GrpE family. Homodimer.

The protein resides in the cytoplasm. Participates actively in the response to hyperosmotic and heat shock by preventing the aggregation of stress-denatured proteins, in association with DnaK and GrpE. It is the nucleotide exchange factor for DnaK and may function as a thermosensor. Unfolded proteins bind initially to DnaJ; upon interaction with the DnaJ-bound protein, DnaK hydrolyzes its bound ATP, resulting in the formation of a stable complex. GrpE releases ADP from DnaK; ATP binding to DnaK triggers the release of the substrate protein, thus completing the reaction cycle. Several rounds of ATP-dependent interactions between DnaJ, DnaK and GrpE are required for fully efficient folding. This chain is Protein GrpE, found in Geotalea uraniireducens (strain Rf4) (Geobacter uraniireducens).